Here is a 187-residue protein sequence, read N- to C-terminus: MLSSLSPYMANPRNTLSQVLNFGLVLSSAFMVWKTLSVITNSTSPVVVVLSGSMEPAFQRGDLLFLWNRSPRVDVGEIVVYNVQGKDIPIVHRVMRVFPDVPTTGGKDVESVEASQKLLTKGDNNLSDDTELYAPGQEFLDRKTDLMGSVRGYVPAIGYVTIMLSEHPWLKSVLLGFMGLMVMLQRE.

The Cytoplasmic segment spans residues Met-1–Asn-14. A helical; Signal-anchor for type II membrane protein membrane pass occupies residues Thr-15–Trp-33. At Lys-34 to Glu-187 the chain is on the lumenal side. Residue Asn-41 is glycosylated (N-linked (GlcNAc...) asparagine). Active-site charge relay system residues include Ser-53 and His-92. An N-linked (GlcNAc...) asparagine glycan is attached at Asn-125. Asp-129 functions as the Charge relay system in the catalytic mechanism. Residues Val-173–Leu-184 form a C-terminal short (CTS) helix region.

It belongs to the peptidase S26B family. Component of the signal peptidase complex (SPC) composed of a catalytic subunit SEC11 and three accessory subunits SPC1, SPC2 and SPC3. The complex induces a local thinning of the ER membrane which is used to measure the length of the signal peptide (SP) h-region of protein substrates. This ensures the selectivity of the complex towards h-regions shorter than 18-20 amino acids. SPC associates with the translocon complex.

The protein localises to the endoplasmic reticulum membrane. The catalysed reaction is Cleavage of hydrophobic, N-terminal signal or leader sequences from secreted and periplasmic proteins.. In terms of biological role, catalytic component of the signal peptidase complex (SPC) which catalyzes the cleavage of N-terminal signal sequences from nascent proteins as they are translocated into the lumen of the endoplasmic reticulum. Specifically cleaves N-terminal signal peptides that contain a hydrophobic alpha-helix (h-region) shorter than 18-20 amino acids. The sequence is that of Signal peptidase complex catalytic subunit SEC11 (SEC11) from Ajellomyces capsulatus (strain H88) (Darling's disease fungus).